A 162-amino-acid polypeptide reads, in one-letter code: Thy-1 membrane glycoprotein (162 aa).

The signal sequence occupies residues M1–G19. Residue Q20 is modified to Pyrrolidone carboxylic acid. The Ig-like V-type domain maps to Q20–K127. 2 disulfides stabilise this stretch: C28–C131 and C38–C105. N-linked (GlcNAc...) asparagine glycans are attached at residues N42, N94, and N118. Residue C131 is the site of GPI-anchor amidated cysteine; alternate attachment. The propeptide at G132–L162 is removed in mature form.

It localises to the cell membrane. Its function is as follows. May play a role in cell-cell or cell-ligand interactions during synaptogenesis and other events in the brain. The sequence is that of Thy-1 membrane glycoprotein (Thy1) from Mus musculus (Mouse).